Here is a 761-residue protein sequence, read N- to C-terminus: BMP/retinoic acid-inducible neural-specific protein 1 (761 aa).

The signal sequence occupies residues M1–P22. Residues R68–M251 enclose the MACPF domain. 7 N-linked (GlcNAc...) asparagine glycosylation sites follow: N156, N433, N443, N553, N599, N631, and N677.

This sequence belongs to the BRINP family.

The protein localises to the cytoplasm. Plays a role in neurogenesis and brain development. May suppress cell cycle progression in postmitotic neurons by inhibiting G1/S transition. In Gallus gallus (Chicken), this protein is BMP/retinoic acid-inducible neural-specific protein 1 (BRINP1).